The sequence spans 111 residues: UPF0122 protein YofM (111 aa).

The protein belongs to the UPF0122 family.

Might take part in the signal recognition particle (SRP) pathway. This is inferred from the conservation of its genetic proximity to ftsY/ffh. May be a regulatory protein. In Lactococcus lactis subsp. lactis (strain IL1403) (Streptococcus lactis), this protein is UPF0122 protein YofM (yofM).